Consider the following 498-residue polypeptide: Cytochrome P450 71B5 (498 aa).

A helical membrane pass occupies residues 3-23 (IFLCFLLLLPLSLIFLKKLLP). Cysteine 439 serves as a coordination point for heme.

It belongs to the cytochrome P450 family. It depends on heme as a cofactor.

The protein resides in the membrane. The polypeptide is Cytochrome P450 71B5 (CYP71B5) (Arabidopsis thaliana (Mouse-ear cress)).